The primary structure comprises 200 residues: Snake venom metalloproteinase rhomb-I (200 aa).

Residues Lys-4–Pro-200 form the Peptidase M12B domain. Residues Glu-7 and Asp-91 each contribute to the Ca(2+) site. Cystine bridges form between Cys-115-Cys-195, Cys-155-Cys-179, and Cys-157-Cys-162. His-140 is a Zn(2+) binding site. Residue Glu-141 is part of the active site. Residues His-144 and His-150 each coordinate Zn(2+). Positions 195 and 198 each coordinate Ca(2+).

Monomer. The cofactor is Zn(2+). Expressed by the venom gland.

The protein localises to the secreted. Functionally, snake venom zinc metalloproteinase that induces hemorrhage. The polypeptide is Snake venom metalloproteinase rhomb-I (Lachesis muta rhombeata (Bushmaster)).